A 630-amino-acid chain; its full sequence is DNA topoisomerase 4 subunit B (630 aa).

Residues Tyr-5, Asn-42, Asp-69, 110-116 (GLHGVGI), and Lys-334 contribute to the ATP site. Positions 412–525 (TELFLVEGDS…NGHVYVALPP (114 aa)) constitute a Toprim domain. Mg(2+)-binding residues include Glu-418, Asp-490, and Asp-492.

Belongs to the type II topoisomerase family. ParE type 1 subfamily. Heterotetramer composed of ParC and ParE. Mg(2+) serves as cofactor. Requires Mn(2+) as cofactor. Ca(2+) is required as a cofactor.

The catalysed reaction is ATP-dependent breakage, passage and rejoining of double-stranded DNA.. Its function is as follows. Topoisomerase IV is essential for chromosome segregation. It relaxes supercoiled DNA. Performs the decatenation events required during the replication of a circular DNA molecule. The sequence is that of DNA topoisomerase 4 subunit B from Salmonella typhi.